The following is a 564-amino-acid chain: Dihydroxy-acid dehydratase (564 aa).

C50 lines the [2Fe-2S] cluster pocket. D82 provides a ligand contact to Mg(2+). C123 is a [2Fe-2S] cluster binding site. 2 residues coordinate Mg(2+): D124 and K125. Residue K125 is modified to N6-carboxylysine. C195 is a [2Fe-2S] cluster binding site. A Mg(2+)-binding site is contributed by E447. The active-site Proton acceptor is S473.

The protein belongs to the IlvD/Edd family. In terms of assembly, homodimer. The cofactor is [2Fe-2S] cluster. Mg(2+) is required as a cofactor.

It catalyses the reaction (2R)-2,3-dihydroxy-3-methylbutanoate = 3-methyl-2-oxobutanoate + H2O. It carries out the reaction (2R,3R)-2,3-dihydroxy-3-methylpentanoate = (S)-3-methyl-2-oxopentanoate + H2O. It functions in the pathway amino-acid biosynthesis; L-isoleucine biosynthesis; L-isoleucine from 2-oxobutanoate: step 3/4. Its pathway is amino-acid biosynthesis; L-valine biosynthesis; L-valine from pyruvate: step 3/4. Its function is as follows. Functions in the biosynthesis of branched-chain amino acids. Catalyzes the dehydration of (2R,3R)-2,3-dihydroxy-3-methylpentanoate (2,3-dihydroxy-3-methylvalerate) into 2-oxo-3-methylpentanoate (2-oxo-3-methylvalerate) and of (2R)-2,3-dihydroxy-3-methylbutanoate (2,3-dihydroxyisovalerate) into 2-oxo-3-methylbutanoate (2-oxoisovalerate), the penultimate precursor to L-isoleucine and L-valine, respectively. The polypeptide is Dihydroxy-acid dehydratase (Chloroflexus aggregans (strain MD-66 / DSM 9485)).